The chain runs to 58 residues: Cholecystokinins (58 aa).

Tyrosine 52 is modified (sulfotyrosine). The residue at position 58 (phenylalanine 58) is a Phenylalanine amide.

Belongs to the gastrin/cholecystokinin family. In terms of assembly, binds to CCK-A receptors in the pancreas and CCK-B receptors in the brain. cholecystokinin 8 binds CCK-A receptors more potently than cholecystokinin 58, cholecystokinin 8 and cholecystokinin 58 bind CCK-B receptors with equal affinity. In terms of processing, the precursor is cleaved by proteases to produce a number of active cholecystokinins. Cholecystokinin 58 occurs in both sulfated (CCK58(s)) and nonsulfated (CCK58(ns)) forms, which differ in their receptor-binding activities. CCK58(s) binds to the CCK-A receptor with high affinity, CCK58(ns) binds poorly to the CCK-A receptor. CCK58(s) and CCK58(ns) both bind the CCK-B receptor. Post-translationally, the precursor is cleaved by ACE, which removes the Gly-Arg-Arg peptide at the C-terminus, leading to mature hormone.

It is found in the secreted. In terms of biological role, this peptide hormone induces gall bladder contraction and the release of pancreatic enzymes in the gut. Its function in the brain is not clear. Binding to CCK-A receptors stimulates amylase release from the pancreas, binding to CCK-B receptors stimulates gastric acid secretion. cholecystokinin 58 and cholecystokinin 8, but not cholecystokinin 58 desnonopeptide, stimulate amylase release from the pancreas. cholecystokinin 58, but not cholecystokinin 8, increases bile-pancreatic volume. The chain is Cholecystokinins from Canis lupus familiaris (Dog).